A 556-amino-acid chain; its full sequence is ATP synthase subunit beta-1, mitochondrial (556 aa).

Residues Met-1–Ala-20 are compositionally biased toward low complexity. Positions Met-1–His-37 are disordered. The N-terminal 51 residues, Met-1–Tyr-51, are a transit peptide targeting the mitochondrion. The residue at position 59 (Ser-59) is a Phosphoserine. Gly-231–Thr-238 contacts ATP.

It belongs to the ATPase alpha/beta chains family. F-type ATPases have 2 components, CF(1) - the catalytic core - and CF(0) - the membrane proton channel. CF(1) has five subunits: alpha(3), beta(3), gamma(1), delta(1), epsilon(1). CF(0) has three main subunits: a, b and c.

It is found in the mitochondrion. It localises to the mitochondrion inner membrane. The catalysed reaction is ATP + H2O + 4 H(+)(in) = ADP + phosphate + 5 H(+)(out). Mitochondrial membrane ATP synthase (F(1)F(0) ATP synthase or Complex V) produces ATP from ADP in the presence of a proton gradient across the membrane which is generated by electron transport complexes of the respiratory chain. F-type ATPases consist of two structural domains, F(1) - containing the extramembraneous catalytic core, and F(0) - containing the membrane proton channel, linked together by a central stalk and a peripheral stalk. During catalysis, ATP synthesis in the catalytic domain of F(1) is coupled via a rotary mechanism of the central stalk subunits to proton translocation. Subunits alpha and beta form the catalytic core in F(1). Rotation of the central stalk against the surrounding alpha(3)beta(3) subunits leads to hydrolysis of ATP in three separate catalytic sites on the beta subunits. The sequence is that of ATP synthase subunit beta-1, mitochondrial from Arabidopsis thaliana (Mouse-ear cress).